The sequence spans 548 residues: Glucose-6-phosphate isomerase (548 aa).

The Proton donor role is filled by glutamate 355. Active-site residues include histidine 386 and lysine 514.

This sequence belongs to the GPI family.

Its subcellular location is the cytoplasm. The enzyme catalyses alpha-D-glucose 6-phosphate = beta-D-fructose 6-phosphate. It functions in the pathway carbohydrate biosynthesis; gluconeogenesis. It participates in carbohydrate degradation; glycolysis; D-glyceraldehyde 3-phosphate and glycerone phosphate from D-glucose: step 2/4. Functionally, catalyzes the reversible isomerization of glucose-6-phosphate to fructose-6-phosphate. In Yersinia enterocolitica serotype O:8 / biotype 1B (strain NCTC 13174 / 8081), this protein is Glucose-6-phosphate isomerase.